Reading from the N-terminus, the 216-residue chain is Vascular endothelial growth factor A (216 aa).

Positions 1 to 26 (MNFLLTWIHWGLAALLYLQSAELSKA) are cleaved as a signal peptide. Disulfide bonds link Cys52–Cys94, Cys83–Cys128, and Cys87–Cys130. N-linked (GlcNAc...) asparagine glycosylation is present at Asn101. Over residues 132-141 (PKKDVKNKQE) the composition is skewed to basic and acidic residues. Residues 132–167 (PKKDVKNKQEKKSKRGKGKGQKRKRKKGRYKPPSFH) form a disordered region. Basic residues predominate over residues 142–161 (KKSKRGKGKGQKRKRKKGRY).

The protein belongs to the PDGF/VEGF growth factor family. As to quaternary structure, homodimer; disulfide-linked. Also found as heterodimer with PGF.

In terms of biological role, growth factor active in angiogenesis, vasculogenesis and endothelial cell growth. Induces endothelial cell proliferation, promotes cell migration, inhibits apoptosis and induces permeabilization of blood vessels. Binds to the FLT1/VEGFR1 and KDR/VEGFR2 receptors, heparan sulfate and heparin. In Gallus gallus (Chicken), this protein is Vascular endothelial growth factor A (VEGFA).